Consider the following 300-residue polypeptide: 4-hydroxy-tetrahydrodipicolinate synthase (300 aa).

A pyruvate-binding site is contributed by threonine 45. The active-site Proton donor/acceptor is tyrosine 140. Catalysis depends on lysine 169, which acts as the Schiff-base intermediate with substrate. Pyruvate is bound at residue isoleucine 210.

Belongs to the DapA family. Homotetramer; dimer of dimers.

The protein resides in the cytoplasm. The enzyme catalyses L-aspartate 4-semialdehyde + pyruvate = (2S,4S)-4-hydroxy-2,3,4,5-tetrahydrodipicolinate + H2O + H(+). Its pathway is amino-acid biosynthesis; L-lysine biosynthesis via DAP pathway; (S)-tetrahydrodipicolinate from L-aspartate: step 3/4. In terms of biological role, catalyzes the condensation of (S)-aspartate-beta-semialdehyde [(S)-ASA] and pyruvate to 4-hydroxy-tetrahydrodipicolinate (HTPA). This chain is 4-hydroxy-tetrahydrodipicolinate synthase, found in Helicobacter pylori (strain G27).